The sequence spans 424 residues: Inhibin beta A chain (424 aa).

A signal peptide spans 1–20 (MPLLWLRGFLLASCWIIVRS). Residues 21–308 (SPTPGSEGHG…EDHPHRRRRR (288 aa)) constitute a propeptide that is removed on maturation. An N-linked (GlcNAc...) asparagine glycan is attached at asparagine 165. Positions 264 to 275 (EVDGDGKKKDGS) are enriched in basic and acidic residues. The segment at 264–306 (EVDGDGKKKDGSDGGLEEEKEQSHRPFLMLQARQSEDHPHRRR) is disordered. Cystine bridges form between cysteine 312-cysteine 320, cysteine 319-cysteine 389, cysteine 348-cysteine 421, and cysteine 352-cysteine 423.

It belongs to the TGF-beta family. Dimeric, linked by one or more disulfide bonds. Inhibin A is a dimer of alpha/INHA and beta-A/INHBA. Activin A is a homodimer of beta-A/INHBA. Activin AB is a dimer of beta-A/INHBA and beta-B/INHBB. Interacts with FST and FSTL3; these interactions prevent activin A interaction to its type II receptor. Activin A interacts with ACVR2A. Activin A interacts with BMPR2. Inhibin A interacts with ACVR1; this interaction creates a non-signaling complex (NSC) that inhibits ACVR1-mediated BMP signaling. Inhibin A interacts with ACVR2A. In terms of tissue distribution, uterus, ovary and liver.

Its subcellular location is the secreted. In terms of biological role, inhibins/activins are involved in regulating a number of diverse functions such as hypothalamic and pituitary hormone secretion, gonadal hormone secretion, germ cell development and maturation, erythroid differentiation, insulin secretion, nerve cell survival, embryonic axial development or bone growth, depending on their subunit composition. Activin A is a homodimer of INHBA that plays a role in several essential biological processes including embryonic development, stem cell maintenance and differentiation, haematopoiesis, cell proliferation and tissue fibrosis. Signals through type I (such as ACVR1B or ACVR1C) and type II receptors (such as ACVR2A, ACVR2B or BMPR2) which, upon ligand binding, phosphorylate SMAD2 and SMAD3 intracellular signaling mediators that form a complex with SMAD4, translocate to the nucleus and modulate gene expression. Can also activate alternative non-canonical intracellular signaling pathways including the p38 MAPK, extracellular signal-regulated kinases 1/2 (ERK1/2) and c-Jun N-terminal kinases (JNKs) to modulate cell migration and differentiation. Alternatively, promotes osteoblastic differentiation via ACVRL1-SMAD1/5/9 pathway. In addition, can engage the type I receptor ACVR1 to form an ACVR1-activin A-type II receptor non-signaling complex (NSC) that renders receptors unavailable for engagement with BMPs, hence resulting in an apparent inhibition of ACVR1-mediated BMP signaling. Its function is as follows. Inhibin A is a dimer of alpha/INHA and beta-A/INHBA that functions as a feedback regulator in the hypothalamic-pituitary-gonadal (HPG) axis. Inhibits the secretion of FSH from the anterior pituitary gland by acting on pituitary gonadotrope cells. Antagonizes activin A by binding to the proteoglycan, betaglycan, and forming a stable complex with and, thereby, sequestering type II activin receptors while excluding type I receptor. This chain is Inhibin beta A chain (Inhba), found in Mus musculus (Mouse).